A 456-amino-acid chain; its full sequence is Bifunctional protein GlmU (456 aa).

The interval 1-230 (MDKRFAVVLA…FQETLGVNDR (230 aa)) is pyrophosphorylase. UDP-N-acetyl-alpha-D-glucosamine is bound by residues 9–12 (LAAG), Lys-23, Gln-73, and 78–79 (GT). Mg(2+) is bound at residue Asp-103. Gly-140, Glu-155, Asn-170, and Asn-228 together coordinate UDP-N-acetyl-alpha-D-glucosamine. Asn-228 lines the Mg(2+) pocket. The segment at 231 to 251 (VALSQAEQFMKERINKRHMQN) is linker. An N-acetyltransferase region spans residues 252–456 (GVTLIDPMNT…DDYVKNIHKK (205 aa)). Positions 333 and 351 each coordinate UDP-N-acetyl-alpha-D-glucosamine. The Proton acceptor role is filled by His-363. UDP-N-acetyl-alpha-D-glucosamine-binding residues include Tyr-366 and Asn-377. Residues 386-387 (NY), Ala-423, and Arg-440 each bind acetyl-CoA.

It in the N-terminal section; belongs to the N-acetylglucosamine-1-phosphate uridyltransferase family. This sequence in the C-terminal section; belongs to the transferase hexapeptide repeat family. Homotrimer. The cofactor is Mg(2+).

The protein resides in the cytoplasm. It catalyses the reaction alpha-D-glucosamine 1-phosphate + acetyl-CoA = N-acetyl-alpha-D-glucosamine 1-phosphate + CoA + H(+). The enzyme catalyses N-acetyl-alpha-D-glucosamine 1-phosphate + UTP + H(+) = UDP-N-acetyl-alpha-D-glucosamine + diphosphate. Its pathway is nucleotide-sugar biosynthesis; UDP-N-acetyl-alpha-D-glucosamine biosynthesis; N-acetyl-alpha-D-glucosamine 1-phosphate from alpha-D-glucosamine 6-phosphate (route II): step 2/2. The protein operates within nucleotide-sugar biosynthesis; UDP-N-acetyl-alpha-D-glucosamine biosynthesis; UDP-N-acetyl-alpha-D-glucosamine from N-acetyl-alpha-D-glucosamine 1-phosphate: step 1/1. It participates in bacterial outer membrane biogenesis; LPS lipid A biosynthesis. Its function is as follows. Catalyzes the last two sequential reactions in the de novo biosynthetic pathway for UDP-N-acetylglucosamine (UDP-GlcNAc). The C-terminal domain catalyzes the transfer of acetyl group from acetyl coenzyme A to glucosamine-1-phosphate (GlcN-1-P) to produce N-acetylglucosamine-1-phosphate (GlcNAc-1-P), which is converted into UDP-GlcNAc by the transfer of uridine 5-monophosphate (from uridine 5-triphosphate), a reaction catalyzed by the N-terminal domain. In Bacillus subtilis (strain 168), this protein is Bifunctional protein GlmU.